A 611-amino-acid polypeptide reads, in one-letter code: MQRMRGKIFKNEPLVPMNVTSEHEQVQSISKEESRSLSSNDLNLSADSELQLESEPEIESEQLKNHEDVYEIIRSMVLATDTTLPRLSNNSLTGIYNHWKLNPNDDLPLYNPTKYIPYEFHSQYNQDRSYIITPRLSVTKLLVSSWCELRSFYQVYSGSVRLPSTKAMTQGTKLHSKLEAEIHPEIDTTEIEQFLISNAMSLRELQTTVPAEEETVVIDLGEVEQLAVDWAEMLIERLFSLIMGAEAREILLHGYLNLKNRSFVTNKDEIRESSSVLVSGIVDYIKFQNVTNPSDGTLFDDIHGFVDSAFDQVDNVPLVDLSQFLPEAKQILQNYDFRLTFTDVKTRSARQIPRQESVLEAAKFQTFYYRHFFHLLSRDSRFTYFSLIENAERRGHDVDKPLSILTTISLLRKHYHIFFKDFVKLANGEPIGFSPFDDSAKSIPYDFVSMFQSSDEFSLANPNHNHFLEQISAIDGIEYDSILSPLLKVWKTPPTLRYLAARASQLFNVFNENIGDITSVEYRYNKTSELLSEKVYDYNFSEFQAEVESASKFWNGEREVIPTEDLSRCSYCEFQSKCMVAGGKTTEAVEKKTIGPKIRQFLNECESSSKG.

Positions 19 to 42 are disordered; it reads VTSEHEQVQSISKEESRSLSSNDL. The segment covering 21–35 has biased composition (basic and acidic residues); that stretch reads SEHEQVQSISKEESR. Positions 147, 569, 572, and 578 each coordinate [4Fe-4S] cluster.

Belongs to the EXO5 family. In terms of assembly, monomer. The cofactor is Mg(2+). Requires [4Fe-4S] cluster as cofactor.

The protein resides in the mitochondrion. Its function is as follows. Single strand DNA specific 5'exonuclease involved in mitochondrial DNA replication and recombination. Releases dinucleotides as main products of catalysis. Has the capacity to slide across 5'double-stranded DNA or 5'RNA sequences and resumes cutting two nucleotides downstream of the double-stranded-to-single-stranded junction or RNA-to-DNA junction, respectively. This is Exonuclease V, mitochondrial (EXO5) from Candida albicans (strain WO-1) (Yeast).